We begin with the raw amino-acid sequence, 210 residues long: Uridine kinase (210 aa).

ATP is bound at residue 12 to 19 (GGSGGGKT).

The protein belongs to the uridine kinase family.

The protein localises to the cytoplasm. The enzyme catalyses uridine + ATP = UMP + ADP + H(+). It carries out the reaction cytidine + ATP = CMP + ADP + H(+). It functions in the pathway pyrimidine metabolism; CTP biosynthesis via salvage pathway; CTP from cytidine: step 1/3. It participates in pyrimidine metabolism; UMP biosynthesis via salvage pathway; UMP from uridine: step 1/1. This chain is Uridine kinase, found in Streptococcus uberis (strain ATCC BAA-854 / 0140J).